Consider the following 179-residue polypeptide: Inner membrane-spanning protein YciB (179 aa).

Helical transmembrane passes span 22-42 (IYAATSALIVATAIVLIYSWV), 50-70 (MALITFVLVAVFGGLTIFFHN), 76-96 (WKVTVIYGLFAGALLISQWVM), 121-141 (LAWAVFFILCGLANIYIAFWL), and 149-169 (FKVFGLTALTLIFTLLSGVYI).

This sequence belongs to the YciB family.

The protein resides in the cell inner membrane. In terms of biological role, plays a role in cell envelope biogenesis, maintenance of cell envelope integrity and membrane homeostasis. The protein is Inner membrane-spanning protein YciB of Citrobacter koseri (strain ATCC BAA-895 / CDC 4225-83 / SGSC4696).